A 684-amino-acid chain; its full sequence is Pseudohemocyanin-1 (684 aa).

The first 23 residues, 1-23, serve as a signal peptide directing secretion; that stretch reads SLVVAAAAASPYSGSHDFSGFQR. The segment at 7–32 is disordered; sequence AAASPYSGSHDFSGFQRDEPDGVPTA. Asn-100, Asn-193, Asn-230, and Asn-626 each carry an N-linked (GlcNAc...) asparagine glycan.

Belongs to the tyrosinase family. Hemocyanin subfamily. In terms of assembly, hexamer. In terms of tissue distribution, strongly expressed in ovaries. Also expressed in heart. Not detected in hepatopancreas, gills, connective tissue or muscle.

Its function is as follows. Does not function as a hemocyanin. The polypeptide is Pseudohemocyanin-1 (Homarus americanus (American lobster)).